Here is a 147-residue protein sequence, read N- to C-terminus: Putative pre-16S rRNA nuclease (147 aa).

It belongs to the YqgF nuclease family.

Its subcellular location is the cytoplasm. Its function is as follows. Could be a nuclease involved in processing of the 5'-end of pre-16S rRNA. The polypeptide is Putative pre-16S rRNA nuclease (Latilactobacillus sakei subsp. sakei (strain 23K) (Lactobacillus sakei subsp. sakei)).